We begin with the raw amino-acid sequence, 30 residues long: V-type proton ATPase catalytic subunit A isoform 2 (30 aa).

The protein belongs to the ATPase alpha/beta chains family. In terms of assembly, V-ATPase is a heteromultimeric enzyme composed of a peripheral catalytic V1 complex (main components: subunits A, B, C, D, E, and F) attached to an integral membrane V0 proton pore complex (main component: the proteolipid protein).

The enzyme catalyses ATP + H2O + 4 H(+)(in) = ADP + phosphate + 5 H(+)(out). Functionally, catalytic subunit of the peripheral V1 complex of vacuolar ATPase. V-ATPase vacuolar ATPase is responsible for acidifying a variety of intracellular compartments in eukaryotic cells. The polypeptide is V-type proton ATPase catalytic subunit A isoform 2 (Equisetum arvense (Field horsetail)).